A 296-amino-acid polypeptide reads, in one-letter code: Bifunctional protein FolD (296 aa).

NADP(+) contacts are provided by residues 166–168 (GRS), S191, and I232.

It belongs to the tetrahydrofolate dehydrogenase/cyclohydrolase family. In terms of assembly, homodimer.

It catalyses the reaction (6R)-5,10-methylene-5,6,7,8-tetrahydrofolate + NADP(+) = (6R)-5,10-methenyltetrahydrofolate + NADPH. The enzyme catalyses (6R)-5,10-methenyltetrahydrofolate + H2O = (6R)-10-formyltetrahydrofolate + H(+). Its pathway is one-carbon metabolism; tetrahydrofolate interconversion. In terms of biological role, catalyzes the oxidation of 5,10-methylenetetrahydrofolate to 5,10-methenyltetrahydrofolate and then the hydrolysis of 5,10-methenyltetrahydrofolate to 10-formyltetrahydrofolate. The sequence is that of Bifunctional protein FolD from Cereibacter sphaeroides (strain ATCC 17025 / ATH 2.4.3) (Rhodobacter sphaeroides).